Consider the following 462-residue polypeptide: Threonine--tRNA ligase, mitochondrial (462 aa).

Residues 1–45 constitute a mitochondrion transit peptide; it reads MKIQLVRWHCSRNALWNRAFYSTRKATKNASSATPATMTSMVSQR.

The protein belongs to the class-II aminoacyl-tRNA synthetase family.

The protein resides in the mitochondrion matrix. The enzyme catalyses tRNA(Thr) + L-threonine + ATP = L-threonyl-tRNA(Thr) + AMP + diphosphate + H(+). The chain is Threonine--tRNA ligase, mitochondrial (MST1) from Saccharomyces cerevisiae (strain ATCC 204508 / S288c) (Baker's yeast).